Consider the following 115-residue polypeptide: Large ribosomal subunit protein uL22c (115 aa).

It belongs to the universal ribosomal protein uL22 family. In terms of assembly, part of the 50S ribosomal subunit.

It is found in the plastid. The protein resides in the chloroplast. Its function is as follows. This protein binds specifically to 23S rRNA. In terms of biological role, the globular domain of the protein is located near the polypeptide exit tunnel on the outside of the subunit, while an extended beta-hairpin is found that lines the wall of the exit tunnel in the center of the 70S ribosome. The protein is Large ribosomal subunit protein uL22c (rpl22) of Phaeodactylum tricornutum (strain CCAP 1055/1).